Reading from the N-terminus, the 443-residue chain is ATP-dependent protease ATPase subunit HslU (443 aa).

Residues Ile19, 61-66, Asp256, Glu321, and Arg393 each bind ATP; that span reads GVGKTE.

This sequence belongs to the ClpX chaperone family. HslU subfamily. A double ring-shaped homohexamer of HslV is capped on each side by a ring-shaped HslU homohexamer. The assembly of the HslU/HslV complex is dependent on binding of ATP.

The protein localises to the cytoplasm. Functionally, ATPase subunit of a proteasome-like degradation complex; this subunit has chaperone activity. The binding of ATP and its subsequent hydrolysis by HslU are essential for unfolding of protein substrates subsequently hydrolyzed by HslV. HslU recognizes the N-terminal part of its protein substrates and unfolds these before they are guided to HslV for hydrolysis. The sequence is that of ATP-dependent protease ATPase subunit HslU from Ralstonia nicotianae (strain ATCC BAA-1114 / GMI1000) (Ralstonia solanacearum).